The sequence spans 2148 residues: Polyketide synthase 1 (2148 aa).

Residues 19–261 (FIFGDQSSCN…TPLAVHAPYH (243 aa)) form an N-terminal acylcarrier protein transacylase domain (SAT) region. One can recognise a Ketosynthase family 3 (KS3) domain in the interval 394-829 (DSKIAIIGMS…GGNTALLVED (436 aa)). Active-site for beta-ketoacyl synthase activity residues include C566, H701, and H745. The interval 929–1233 (AFVFSGQGSQ…PSLMRNKDGW (305 aa)) is malonyl-CoA:ACP transacylase (MAT) domain. S1018 (for acyl/malonyl transferase activity) is an active-site residue. The segment at 1310-1624 (TASVHRIVHE…RKVLNTAMPP (315 aa)) is product template (PT) domain. Residues 1314–1447 (HRIVHESVDK…SSLHFEQPKV (134 aa)) are N-terminal hotdog fold. Residues 1314-1619 (HRIVHESVDK…FQGIPRKVLN (306 aa)) form the PKS/mFAS DH domain. H1346 (proton acceptor; for dehydratase activity) is an active-site residue. Residues 1474–1619 (LNSRMSSGVI…FQGIPRKVLN (146 aa)) are C-terminal hotdog fold. The Proton donor; for dehydratase activity role is filled by D1533. Positions 1619-1655 (NTAMPPPKSQNEAQVHSSPAKSRPKPPGSASSVHSGR) are disordered. Residues 1627-1638 (SQNEAQVHSSPA) show a composition bias toward polar residues. In terms of domain architecture, Carrier 1 spans 1678 to 1752 (RDPMQALFKI…DLATHLGFDT (75 aa)). S1712 carries the O-(pantetheine 4'-phosphoryl)serine modification. A compositionally biased stretch (low complexity) spans 1756–1769 (DQSSGQSSSCGGLS). The segment at 1756–1796 (DQSSGQSSSCGGLSPRSDSTGEITSNATTPPSLSPRGSVSG) is disordered. Polar residues predominate over residues 1771-1796 (RSDSTGEITSNATTPPSLSPRGSVSG). Residues 1793 to 1870 (SVSGSQCKDV…SFKHMFQQGH (78 aa)) enclose the Carrier 2 domain. S1830 is subject to O-(pantetheine 4'-phosphoryl)serine. The interval 1882-2146 (LKQYRATSTL…ERVAAFIRST (265 aa)) is thioesterase (TE) domain. S1973 functions as the For thioesterase activity in the catalytic mechanism.

Polyketide synthase; part of the Pks1 gene cluster that mediates the biosynthesis of an anthraquinone derivative pigment that contributes to conidial pigmentation that provides protection from UV radiation, heat and cold stress. The polyketide synthase Pks1 produces 1-acetyl-2,4,6,8-tetrahydroxy-9,10-anthraquinone though condensation of acetyl-CoA with malonyl-CoA. The dehydratase EthD and the laccase Mlac1 further convert the anthraquinone derivative into the final conidial pigment. In Metarhizium acridum (strain CQMa 102), this protein is Polyketide synthase 1.